The primary structure comprises 500 residues: Zinc finger and BTB domain-containing protein 34 (500 aa).

The region spanning 32–96 is the BTB domain; that stretch reads CDIIVHIQGQ…CYTGRMSLQL (65 aa). Ser164 bears the Phosphoserine mark. Residues 164 to 209 are disordered; sequence SPPYCSQGRQPTASSDLRMETTPSKALRSRLQEEGHSDRGSSGSVS. Residues 193–202 are compositionally biased toward basic and acidic residues; sequence RLQEEGHSDR. Glycyl lysine isopeptide (Lys-Gly) (interchain with G-Cter in SUMO2) cross-links involve residues Lys235 and Lys237. Residues 236–245 are compositionally biased toward basic and acidic residues; sequence VKMEKSDRPS. 2 disordered regions span residues 236-256 and 341-360; these read VKMEKSDRPSCSDSSSLGDDG and SDSEAMMNNPGYESSPRERS. C2H2-type zinc fingers lie at residues 372–394 and 400–422; these read LICIYCGKSFNQKGSLDRHMRLH and FVCKFCGKKYTRKDQLEYHIRGH. A Glycyl lysine isopeptide (Lys-Gly) (interchain with G-Cter in SUMO2) cross-link involves residue Lys426. Residues 428-451 form a C2H2-type 3 zinc finger; sequence FRCEICGKCFPFQGTLNQHLRKNH. Ser463 carries the phosphoserine modification. Lys474 is covalently cross-linked (Glycyl lysine isopeptide (Lys-Gly) (interchain with G-Cter in SUMO2)). A disordered region spans residues 478 to 500; it reads DASASEMGLDSRMEIHTVSDAPD.

In terms of tissue distribution, expressed in several tissues, including heart, brain, thymus, skeletal muscle, small intestine, testis, kidney, placenta, peripheral blood cells and adult and fetal liver.

Its subcellular location is the nucleus. In terms of biological role, may be a transcriptional repressor. This chain is Zinc finger and BTB domain-containing protein 34 (ZBTB34), found in Homo sapiens (Human).